We begin with the raw amino-acid sequence, 817 residues long: Phosphoenolpyruvate synthase (817 aa).

His-442 acts as the Tele-phosphohistidine intermediate in catalysis. The substrate site is built by Arg-540, Arg-587, Glu-684, Gly-706, Thr-707, Asn-708, and Asp-709. Position 684 (Glu-684) interacts with Mg(2+). Asp-709 is a binding site for Mg(2+). The active-site Proton donor is Cys-756.

The protein belongs to the PEP-utilizing enzyme family. Homooctamer. Mg(2+) serves as cofactor.

The catalysed reaction is pyruvate + ATP + H2O = phosphoenolpyruvate + AMP + phosphate + 2 H(+). It functions in the pathway carbohydrate biosynthesis; gluconeogenesis. Functionally, catalyzes the phosphorylation of pyruvate to phosphoenolpyruvate. This Pyrococcus furiosus (strain ATCC 43587 / DSM 3638 / JCM 8422 / Vc1) protein is Phosphoenolpyruvate synthase (ppsA).